A 217-amino-acid polypeptide reads, in one-letter code: tRNA (guanine-N(7)-)-methyltransferase (217 aa).

Positions 48, 73, 100, and 123 each coordinate S-adenosyl-L-methionine. Asp-123 is an active-site residue. Substrate is bound by residues Lys-127 and Asp-159.

The protein belongs to the class I-like SAM-binding methyltransferase superfamily. TrmB family.

The enzyme catalyses guanosine(46) in tRNA + S-adenosyl-L-methionine = N(7)-methylguanosine(46) in tRNA + S-adenosyl-L-homocysteine. It functions in the pathway tRNA modification; N(7)-methylguanine-tRNA biosynthesis. Its function is as follows. Catalyzes the formation of N(7)-methylguanine at position 46 (m7G46) in tRNA. The chain is tRNA (guanine-N(7)-)-methyltransferase from Leptospira interrogans serogroup Icterohaemorrhagiae serovar copenhageni (strain Fiocruz L1-130).